Reading from the N-terminus, the 163-residue chain is UPF0478 protein SAB1599c (163 aa).

The helical transmembrane segment at isoleucine 7 to leucine 27 threads the bilayer.

Belongs to the UPF0478 family.

Its subcellular location is the cell membrane. The sequence is that of UPF0478 protein SAB1599c from Staphylococcus aureus (strain bovine RF122 / ET3-1).